Consider the following 325-residue polypeptide: Olfactory receptor 5T18 (325 aa).

Residues M1 to Q22 lie on the Extracellular side of the membrane. N-linked (GlcNAc...) asparagine glycosylation occurs at N3. A run of 2 helical transmembrane segments spans residues I23–L43 and I44–L64. Residues S65 to T97 are Extracellular-facing. C95 and C187 are disulfide-bonded. The helical transmembrane segment at Q98 to Y118 threads the bilayer. Topologically, residues D119–Y139 are cytoplasmic. A helical membrane pass occupies residues I140 to A160. Residues T161–E194 are Extracellular-facing. Residues L195–S215 traverse the membrane as a helical segment. At Y216–K234 the chain is on the cytoplasmic side. The chain crosses the membrane as a helical span at residues V235–F255. The Extracellular segment spans residues M256 to D269. A helical transmembrane segment spans residues M270 to L290. Over R291 to P325 the chain is Cytoplasmic.

Belongs to the G-protein coupled receptor 1 family.

The protein localises to the cell membrane. In terms of biological role, potential odorant receptor. This chain is Olfactory receptor 5T18, found in Mus musculus (Mouse).